The sequence spans 95 residues: MNLRPLHDRVIVKRQEEEKVSAGGIVLPGSAAEKPSQGEVIAVGEGKLLENGERRKMAVKAGDKILFGKYTGSEVKVDGVDYIIMREDEIFAVIE.

It belongs to the GroES chaperonin family. In terms of assembly, heptamer of 7 subunits arranged in a ring. Interacts with the chaperonin GroEL.

It localises to the cytoplasm. Functionally, together with the chaperonin GroEL, plays an essential role in assisting protein folding. The GroEL-GroES system forms a nano-cage that allows encapsulation of the non-native substrate proteins and provides a physical environment optimized to promote and accelerate protein folding. GroES binds to the apical surface of the GroEL ring, thereby capping the opening of the GroEL channel. This Dichelobacter nodosus (strain VCS1703A) protein is Co-chaperonin GroES.